Consider the following 907-residue polypeptide: Cytochrome b561, DM13 and DOMON domain-containing protein At5g54830 (907 aa).

Residues Met-1–Gly-24 form the signal peptide. The 109-residue stretch at Ser-31 to Ser-139 folds into the DM13 domain. The interval Ser-144 to Ala-172 is disordered. Residues Pro-153–Glu-168 are compositionally biased toward polar residues. DOMON domains follow at residues Asp-184–Gly-329 and Gln-524–Gly-645. The 198-residue stretch at Leu-653 to Tyr-850 folds into the Cytochrome b561 domain. A helical transmembrane segment spans residues Val-685–Ile-705. His-689 and His-723 together coordinate heme b. Helical transmembrane passes span Gly-730–Phe-750, His-754–Leu-774, Ser-795–Met-815, and Gly-829–Glu-849. Heme b contacts are provided by His-754 and His-796. Positions Gly-884–Gly-897 are enriched in basic and acidic residues. The segment at Gly-884–Lys-907 is disordered.

Heme b is required as a cofactor.

Its subcellular location is the membrane. In terms of biological role, may act as a catecholamine-responsive trans-membrane electron transporter. The chain is Cytochrome b561, DM13 and DOMON domain-containing protein At5g54830 from Arabidopsis thaliana (Mouse-ear cress).